The primary structure comprises 520 residues: Ribonuclease Y (520 aa).

The Extracellular segment spans residues 1-3 (MTP). Residues 4-24 (IMMVLISILLILLGLVVGYFV) traverse the membrane as a helical segment. The Cytoplasmic portion of the chain corresponds to 25 to 520 (RKTIAEAKIA…RETRAVEYAK (496 aa)). Residues 29–141 (AEAKIAGARG…KVDEMIRMQQ (113 aa)) are a coiled coil. The 64-residue stretch at 210–273 (TVSVVNLPND…ETARIALDKL (64 aa)) folds into the KH domain. The 94-residue stretch at 336 to 429 (VLKHSMEVAF…VAAADALSAA (94 aa)) folds into the HD domain.

This sequence belongs to the RNase Y family. Homodimer. Component of a possible RNA degradosome complex composed of rny, rnjA, rnjB, pnp, pfkA and eno (although rnjA and rnjB's presence is unclear). Interacts with RNA helicase CshA which may also be a member of the RNA degradosome complex. Interacts with full-length dynamin-like protein DynA. The cofactor is Mg(2+). Mn(2+) serves as cofactor. It depends on Zn(2+) as a cofactor.

The protein resides in the cell membrane. Its activity is regulated as follows. Shows preference for transcripts carrying a monophosphate group at the 5' end. In terms of biological role, endoribonuclease that initiates mRNA decay. Initiates the decay of all SAM-dependent riboswitches, such as yitJ riboswitch. Involved in processing of the gapA operon mRNA, it cleaves between cggR and gapA. Is also the decay-initiating endonuclease for rpsO mRNA. Involved in degradation of type I toxin-antitoxin system bsrG/SR4 RNAs and a minor role in degradation of type I toxin-antitoxin system bsrE/SR5 degradation. In Bacillus subtilis (strain 168), this protein is Ribonuclease Y (rny).